The primary structure comprises 114 residues: Neurotrophic factor BDNF precursor form (114 aa).

3 disulfides stabilise this stretch: Cys14–Cys81, Cys59–Cys110, and Cys69–Cys112.

This sequence belongs to the NGF-beta family. Monomers and homodimers. Binds to NTRK2/TRKB. Can form heterodimers with other neurotrophin family members, such as NTF3 and NTF4 (in vitro), but the physiological relevance of this is not clear. BDNF precursor form: interacts with the heterodimer formed by NGFR and SORCS2. Mature BDNF has much lower affinity for the heterodimer formed by NGFR and SORCS2. N-glycosylated and glycosulfated, contrary to mature BDNF. Post-translationally, mature BDNF is produced by proteolytic removal of the propeptide, catalyzed by a FURIN family member. In addition, the precursor form is proteolytically cleaved within the propeptide, but this is not an obligatory intermediate for the production of mature BDNF. Can be converted into mature BDNF by plasmin (PLG).

Its subcellular location is the secreted. In terms of biological role, important signaling molecule that activates signaling cascades downstream of NTRK2. During development, promotes the survival and differentiation of selected neuronal populations of the peripheral and central nervous systems. Participates in axonal growth, pathfinding and in the modulation of dendritic growth and morphology. Major regulator of synaptic transmission and plasticity at adult synapses in many regions of the CNS. The versatility of BDNF is emphasized by its contribution to a range of adaptive neuronal responses including long-term potentiation (LTP), long-term depression (LTD), certain forms of short-term synaptic plasticity, as well as homeostatic regulation of intrinsic neuronal excitability. Important signaling molecule that activates signaling cascades downstream of NTRK2. Activates signaling cascades via the heterodimeric receptor formed by NGFR and SORCS2. Signaling via NGFR and SORCS2 plays a role in synaptic plasticity and long-term depression (LTD). Binding to NGFR and SORCS2 promotes neuronal apoptosis. Promotes neuronal growth cone collapse. The protein is Neurotrophic factor BDNF precursor form (BDNF) of Macaca mulatta (Rhesus macaque).